Here is a 296-residue protein sequence, read N- to C-terminus: MKTFLILALLAIVATTATTAVRVPVPQPQPQNPSQPQPQGQVPLVQQQQFPGQQQQFPPQQPYPQPQPFPSQQPYLQLQPFPQPQPFPPQLPYPQPPPFSPQQPYPQPQPQYPQPQQPISQQQAQQQQQQQQQQQQQQQQQQILQQILQQQLIPCRDVVLQQHNIAHARSQVLQQSTYQPLQQLCCQQLWQIPEQSRCQAIHNVVHAIILHQQQRQQQPSSQVSLQQPQQQYPSGQGFFQPSQQNPQAQGSVQPQQLPQFEEIRNLALQTLPRMCNVYIPPYCSTTIAPFGIFGTN.

Positions 1-20 (MKTFLILALLAIVATTATTA) are cleaved as a signal peptide. Disordered stretches follow at residues 24–126 (PVPQ…QAQQ) and 220–255 (SSQV…VQPQ). The segment covering 25–36 (VPQPQPQNPSQP) has biased composition (pro residues). Residues 37–58 (QPQGQVPLVQQQQFPGQQQQFP) show a composition bias toward low complexity. 2 stretches are compositionally biased toward pro residues: residues 59–71 (PQQP…PFPS) and 81–116 (FPQP…PQPQ). Composition is skewed to low complexity over residues 117-126 (QPISQQQAQQ) and 220-241 (SSQV…FFQP). Polar residues predominate over residues 242-255 (SQQNPQAQGSVQPQ).

It belongs to the gliadin/glutenin family. In terms of processing, substrate of transglutaminase.

In terms of biological role, gliadin is the major seed storage protein in wheat. The polypeptide is Alpha/beta-gliadin clone PW1215 (Triticum aestivum (Wheat)).